Consider the following 1493-residue polypeptide: Mitogen-activated protein kinase kinase kinase 1 (1493 aa).

Residues 1–23 (MAAAAGDRASSSGFPGAAAASPE) show a composition bias toward low complexity. 2 disordered regions span residues 1–178 (MAAA…PEER) and 194–300 (HEWL…EETS). Ala2 is modified (N-acetylalanine). A Phosphoserine modification is found at Ser21. The span at 24-35 (AGGGGGGGGALQ) shows a compositional bias: gly residues. Residues 36–46 (GSGAPAAGAAG) are compositionally biased toward low complexity. Positions 89-99 (PPCPSTSPSPE) are enriched in pro residues. Over residues 140-156 (ARSPAGAEPPSAAAPSG) the composition is skewed to low complexity. Ser142 carries the phosphoserine modification. Basic and acidic residues predominate over residues 157–178 (REMENKETLKGLHKMEDRPEER). Residues 235 to 256 (SAAPAPKGRRSPSPGSSPSGRS) show a composition bias toward low complexity. Ser270 bears the Phosphoserine mark. Thr280 carries the post-translational modification Phosphothreonine. Residues Ser287, Ser292, and Ser295 each carry the phosphoserine modification. Residues 333–361 (YRVFIGPQNCSCGRGAFCIHLLFVMLRVF) form an SWIM-type zinc finger. Residues 411–428 (SNSHTLSSSSTSTSSSEN) are compositionally biased toward low complexity. Residues 411–431 (SNSHTLSSSSTSTSSSENSIK) form a disordered region. The RING-type zinc-finger motif lies at 438 to 487 (CPICLLGMLDEESLTVCEDGCRNKLHHHCMSIWAEECRRNREPLICPLCR). Phosphoserine occurs at positions 502 and 526. Disordered stretches follow at residues 506–531 (SPAS…RRNQ) and 895–914 (EHTV…RLSA). Residues 512-527 (AVQQPSSPQQPVAGSQ) are compositionally biased toward low complexity. Ser915 bears the Phosphoserine mark. Disordered regions lie at residues 927–957 (SVGL…LNSS) and 992–1066 (PCKI…TLDL). The segment covering 998–1013 (ASPQTQRKFSLQFQRN) has biased composition (polar residues). Residues Ser999 and Ser1024 each carry the phosphoserine modification. A compositionally biased stretch (polar residues) spans 1049 to 1063 (GSTSKLGDATKSSMT). The region spanning 1224–1489 (WLKGQQIGLG…SRELLKHPVF (266 aa)) is the Protein kinase domain. Residues 1230–1238 (IGLGAFSSC) and Lys1253 each bind ATP. Asp1350 (proton acceptor) is an active-site residue. 2 positions are modified to phosphothreonine; by autocatalysis: Thr1381 and Thr1393.

This sequence belongs to the protein kinase superfamily. STE Ser/Thr protein kinase family. MAP kinase kinase kinase subfamily. In terms of assembly, binds both upstream activators and downstream substrates in multimolecular complexes through its N-terminus. Oligomerizes after binding MAP4K2 or TRAF2. Interacts with AXIN1. Interacts (via the kinase catalytic domain) with STK38. Interacts with GRIPAP1. It depends on Mg(2+) as a cofactor. Post-translationally, autophosphorylated. Highly expressed in the heart and spleen while a lower level expression is seen in the liver.

The catalysed reaction is L-seryl-[protein] + ATP = O-phospho-L-seryl-[protein] + ADP + H(+). It carries out the reaction L-threonyl-[protein] + ATP = O-phospho-L-threonyl-[protein] + ADP + H(+). With respect to regulation, activated by autophosphorylation on Thr-1381 and Thr-1393 following oligomerization. In terms of biological role, component of a protein kinase signal transduction cascade. Activates the ERK and JNK kinase pathways by phosphorylation of MAP2K1 and MAP2K4. May phosphorylate the MAPK8/JNK1 kinase. Activates CHUK and IKBKB, the central protein kinases of the NF-kappa-B pathway. This chain is Mitogen-activated protein kinase kinase kinase 1 (Map3k1), found in Mus musculus (Mouse).